Here is a 70-residue protein sequence, read N- to C-terminus: Protein SlyX homolog (70 aa).

This sequence belongs to the SlyX family.

This chain is Protein SlyX homolog, found in Pseudoalteromonas atlantica (strain T6c / ATCC BAA-1087).